The sequence spans 170 residues: Transmembrane protein 252 (170 aa).

A run of 2 helical transmembrane segments spans residues 8–28 and 40–60; these read ILCALALLMGFLMVCLGAFFI and LIAAYLLLPLGFVILLSGIFW. The disordered stretch occupies residues 112–147; the sequence is CPAEREASGIPPPLYTETGLEFQDGNDSHPEAPPSY.

The protein resides in the membrane. The chain is Transmembrane protein 252 (TMEM252) from Pongo abelii (Sumatran orangutan).